Consider the following 215-residue polypeptide: Probable phosphoglycerate mutase GpmB (215 aa).

Substrate is bound by residues 8 to 15 (RHGETQWN), 21 to 22 (QG), Arg-58, Lys-60, 82 to 85 (ELDM), 104 to 105 (RR), and 151 to 152 (GI). Catalysis depends on His-9, which acts as the Tele-phosphohistidine intermediate. Catalysis depends on Glu-82, which acts as the Proton donor/acceptor.

The protein belongs to the phosphoglycerate mutase family. GpmB subfamily.

It catalyses the reaction (2R)-2-phosphoglycerate = (2R)-3-phosphoglycerate. It functions in the pathway carbohydrate degradation; glycolysis; pyruvate from D-glyceraldehyde 3-phosphate: step 3/5. This chain is Probable phosphoglycerate mutase GpmB, found in Salmonella choleraesuis (strain SC-B67).